Consider the following 85-residue polypeptide: RNA-binding protein Hfq (85 aa).

One can recognise a Sm domain in the interval 10–69 (DPFLNILRKEHVPVSIYLVNGIKLQGQIESFDQYVVLLKNTVTQMVYKHAISTVVPARPV).

It belongs to the Hfq family. As to quaternary structure, homohexamer.

Functionally, RNA chaperone that binds small regulatory RNA (sRNAs) and mRNAs to facilitate mRNA translational regulation in response to envelope stress, environmental stress and changes in metabolite concentrations. Also binds with high specificity to tRNAs. The protein is RNA-binding protein Hfq of Laribacter hongkongensis (strain HLHK9).